We begin with the raw amino-acid sequence, 646 residues long: Protein SENSITIVE TO UV 2 (646 aa).

Residues 42–70 are disordered; sequence PAPPPSTKISSSLSHPMQLQSSAGQQRKQ. Residues 48 to 70 show a composition bias toward polar residues; the sequence is TKISSSLSHPMQLQSSAGQQRKQ. A Nuclear localization signal motif is present at residues 119–126; it reads NRRCDSEK. Residues 123–157 adopt a coiled-coil conformation; the sequence is DSEKDLEIDRLKKELERVSKQLLDVEQECSQLKKG. The Phosphatase tensin-type domain occupies 376 to 646; that stretch reads KRTEQDVKQE…VFAFLGDNTI (271 aa).

This sequence belongs to the serpin family. In terms of assembly, forms multimers through the coiled-coil domain. Probably phosphorylated by ATR. In terms of tissue distribution, accumulates throughout the root tip.

It is found in the nucleus. It localises to the cytoplasm. Its function is as follows. Required for tolerance to DNA-damaging and cross-linking agents such as UVB irradiation, gamma-radiation, aphidicolin, ionizing radiation and hydroxyurea (HU), cisplatin (CDDP) and mitomycin C (MMC). Involved in cell-cycle G2/M arrest in response to DNA damage. Required for aluminum-dependent gene regulation and root growth inhibition in an ATR-dependent manner by halting cell cycle progression and triggering loss of the quiescent center (QC). This chain is Protein SENSITIVE TO UV 2, found in Arabidopsis thaliana (Mouse-ear cress).